The chain runs to 305 residues: MATKNEEILRKPDWLKIKLNTNENYTGLKKMMRKKNLNTVCEEAKCPNIHECWGARRTATFMILGAVCTRACRFCAVKTGLPNELDLNEPERVAESVELMNLKHVVITAVARDDLRDAGSNVYAETVRKVRERNPFTTIEILPSDMGGDYDALETLMASRPDILNHNIETVRRLTPRVRARATYDRTLEFLRRSKELQPDIPTKSSIMVGLGETIEEIYETMDDLRANDVDILTIGQYLQPSRKHLKVQKYYTPLEFGKLRKVAMDKGFKHCQAGPLVRSSYHADEQVNEAAKEKQRQGEAQLNS.

7 residues coordinate [4Fe-4S] cluster: cysteine 41, cysteine 46, cysteine 52, cysteine 68, cysteine 72, cysteine 75, and serine 281. One can recognise a Radical SAM core domain in the interval 54-270; the sequence is GARRTATFMI…RKVAMDKGFK (217 aa). Positions 283-298 are enriched in basic and acidic residues; the sequence is HADEQVNEAAKEKQRQ. The tract at residues 283-305 is disordered; sequence HADEQVNEAAKEKQRQGEAQLNS.

The protein belongs to the radical SAM superfamily. Lipoyl synthase family. It depends on [4Fe-4S] cluster as a cofactor.

The protein localises to the cytoplasm. It carries out the reaction [[Fe-S] cluster scaffold protein carrying a second [4Fe-4S](2+) cluster] + N(6)-octanoyl-L-lysyl-[protein] + 2 oxidized [2Fe-2S]-[ferredoxin] + 2 S-adenosyl-L-methionine + 4 H(+) = [[Fe-S] cluster scaffold protein] + N(6)-[(R)-dihydrolipoyl]-L-lysyl-[protein] + 4 Fe(3+) + 2 hydrogen sulfide + 2 5'-deoxyadenosine + 2 L-methionine + 2 reduced [2Fe-2S]-[ferredoxin]. Its pathway is protein modification; protein lipoylation via endogenous pathway; protein N(6)-(lipoyl)lysine from octanoyl-[acyl-carrier-protein]. In terms of biological role, catalyzes the radical-mediated insertion of two sulfur atoms into the C-6 and C-8 positions of the octanoyl moiety bound to the lipoyl domains of lipoate-dependent enzymes, thereby converting the octanoylated domains into lipoylated derivatives. This chain is Lipoyl synthase, found in Staphylococcus aureus (strain bovine RF122 / ET3-1).